Reading from the N-terminus, the 95-residue chain is MKLVFLFLLVTIPICCYASGSGCSILDEVIRGTINSTVTLHDYMKLVKPYVQDHFTEKAVKQFKQCFLDQTDKTLENVGVMMEAIFNSESCQQPS.

The signal sequence occupies residues 1–18 (MKLVFLFLLVTIPICCYA). An N-linked (GlcNAc...) asparagine glycan is attached at N35.

The protein belongs to the secretoglobin family. Lipophilin subfamily. As to quaternary structure, prostatein is composed of three different peptides called C1, C2 and C3. These form covalent C1:C3 (F) and C2:C3 (S) heterodimers whose non-covalent association forms tetrameric (C1:C3/C3:C2) prostatein molecules. Highly expressed in ventral prostate.

It localises to the secreted. Part of prostatein which is the major secretory glycoprotein of ventral prostate gland. Steroid-binding protein; can bind non-polar steroids, cholesterol and a group of small proline-rich peptides. This chain is Secretoglobin family 2A member 2 (Scgb2a2), found in Rattus norvegicus (Rat).